The chain runs to 309 residues: tRNA pseudouridine synthase B (309 aa).

Asp39 acts as the Nucleophile in catalysis. Residues 229–306 (LPRVVVHQES…ERVLTLRKVF (78 aa)) enclose the PUA domain.

The protein belongs to the pseudouridine synthase TruB family. Type 1 subfamily.

It carries out the reaction uridine(55) in tRNA = pseudouridine(55) in tRNA. Its function is as follows. Responsible for synthesis of pseudouridine from uracil-55 in the psi GC loop of transfer RNAs. The chain is tRNA pseudouridine synthase B from Thermotoga maritima (strain ATCC 43589 / DSM 3109 / JCM 10099 / NBRC 100826 / MSB8).